Here is a 388-residue protein sequence, read N- to C-terminus: F-box/kelch-repeat protein At3g17530 (388 aa).

The region spanning 1-50 (MMISDLPHDLESEILSRVPAKSLAKWKTTCKRWYALFRDPSFVKKNFDKA) is the F-box domain. Kelch repeat units lie at residues 163 to 208 (CCYY…VSLK) and 336 to 383 (RIYI…AEEN).

This Arabidopsis thaliana (Mouse-ear cress) protein is F-box/kelch-repeat protein At3g17530.